Reading from the N-terminus, the 266-residue chain is Beta-lactamase OXA-11 (266 aa).

An N-terminal signal peptide occupies residues 1-20 (MKTFAAYVIIACLSSTALAG). Ser67 serves as the catalytic Acyl-ester intermediate. Residue Lys70 is modified to N6-carboxylysine. Substrate is bound at residue 205-207 (KTG).

This sequence belongs to the class-D beta-lactamase family.

The enzyme catalyses a beta-lactam + H2O = a substituted beta-amino acid. Functionally, hydrolyzes carbenicillin, oxacillin and cephalosporin. Does not hydrolyze cefoxitin or carbapenems. The sequence is that of Beta-lactamase OXA-11 (bla) from Pseudomonas aeruginosa.